The sequence spans 299 residues: 4-diphosphocytidyl-2-C-methyl-D-erythritol kinase (299 aa).

Lysine 17 is a catalytic residue. 99 to 109 (PLASGLGGGSS) provides a ligand contact to ATP. The active site involves aspartate 142.

The protein belongs to the GHMP kinase family. IspE subfamily.

It catalyses the reaction 4-CDP-2-C-methyl-D-erythritol + ATP = 4-CDP-2-C-methyl-D-erythritol 2-phosphate + ADP + H(+). The protein operates within isoprenoid biosynthesis; isopentenyl diphosphate biosynthesis via DXP pathway; isopentenyl diphosphate from 1-deoxy-D-xylulose 5-phosphate: step 3/6. Its function is as follows. Catalyzes the phosphorylation of the position 2 hydroxy group of 4-diphosphocytidyl-2C-methyl-D-erythritol. The sequence is that of 4-diphosphocytidyl-2-C-methyl-D-erythritol kinase from Deinococcus radiodurans (strain ATCC 13939 / DSM 20539 / JCM 16871 / CCUG 27074 / LMG 4051 / NBRC 15346 / NCIMB 9279 / VKM B-1422 / R1).